Here is a 75-residue protein sequence, read N- to C-terminus: ATP synthase subunit c (75 aa).

The next 2 membrane-spanning stretches (helical) occupy residues 13 to 33 (LNVV…GILI) and 54 to 74 (MFLG…LAFI).

The protein belongs to the ATPase C chain family. In terms of assembly, F-type ATPases have 2 components, F(1) - the catalytic core - and F(0) - the membrane proton channel. F(1) has five subunits: alpha(3), beta(3), gamma(1), delta(1), epsilon(1). F(0) has three main subunits: a(1), b(2) and c(10-14). The alpha and beta chains form an alternating ring which encloses part of the gamma chain. F(1) is attached to F(0) by a central stalk formed by the gamma and epsilon chains, while a peripheral stalk is formed by the delta and b chains.

It is found in the cell membrane. Its function is as follows. F(1)F(0) ATP synthase produces ATP from ADP in the presence of a proton or sodium gradient. F-type ATPases consist of two structural domains, F(1) containing the extramembraneous catalytic core and F(0) containing the membrane proton channel, linked together by a central stalk and a peripheral stalk. During catalysis, ATP synthesis in the catalytic domain of F(1) is coupled via a rotary mechanism of the central stalk subunits to proton translocation. Key component of the F(0) channel; it plays a direct role in translocation across the membrane. A homomeric c-ring of between 10-14 subunits forms the central stalk rotor element with the F(1) delta and epsilon subunits. The protein is ATP synthase subunit c of Bifidobacterium adolescentis (strain ATCC 15703 / DSM 20083 / NCTC 11814 / E194a).